The primary structure comprises 910 residues: Protein translocase subunit SecA (910 aa).

ATP-binding positions include Gln87, 105 to 109 (GEGKT), and Asp512. Composition is skewed to basic and acidic residues over residues 561 to 571 (RHESRRIDNQL), 841 to 853 (EEER…ELAR), and 880 to 890 (TFEREARKVGR). Disordered stretches follow at residues 561–584 (RHES…AGSS) and 835–910 (EEVD…GKIN). Zn(2+) contacts are provided by Cys894, Cys896, Cys905, and His906. Positions 900–910 (KKYKQCHGKIN) are enriched in basic residues.

This sequence belongs to the SecA family. As to quaternary structure, monomer and homodimer. Part of the essential Sec protein translocation apparatus which comprises SecA, SecYEG and auxiliary proteins SecDF-YajC and YidC. Zn(2+) serves as cofactor.

It is found in the cell inner membrane. The protein localises to the cytoplasm. The enzyme catalyses ATP + H2O + cellular proteinSide 1 = ADP + phosphate + cellular proteinSide 2.. Part of the Sec protein translocase complex. Interacts with the SecYEG preprotein conducting channel. Has a central role in coupling the hydrolysis of ATP to the transfer of proteins into and across the cell membrane, serving both as a receptor for the preprotein-SecB complex and as an ATP-driven molecular motor driving the stepwise translocation of polypeptide chains across the membrane. This Photobacterium profundum (strain SS9) protein is Protein translocase subunit SecA.